The following is a 177-amino-acid chain: Ubiquitin-conjugating enzyme E2 C (177 aa).

Residues 1–31 (MSGQNIDPAANQVRQKERPRDMTTSKERHSV) form a disordered region. Basic and acidic residues predominate over residues 14–30 (RQKERPRDMTTSKERHS). The UBC core domain occupies 30–175 (SVSKRLQQEL…LHEKYKTAQS (146 aa)). Cys-114 serves as the catalytic Glycyl thioester intermediate.

This sequence belongs to the ubiquitin-conjugating enzyme family. As to quaternary structure, component of the APC/C complex. Post-translationally, autoubiquitinated by the APC/C complex, leading to its degradation by the proteasome.

The enzyme catalyses S-ubiquitinyl-[E1 ubiquitin-activating enzyme]-L-cysteine + [E2 ubiquitin-conjugating enzyme]-L-cysteine = [E1 ubiquitin-activating enzyme]-L-cysteine + S-ubiquitinyl-[E2 ubiquitin-conjugating enzyme]-L-cysteine.. It catalyses the reaction S-ubiquitinyl-[E1 ubiquitin-activating enzyme]-L-cysteine + [acceptor protein]-L-lysine = [E1 ubiquitin-activating enzyme]-L-cysteine + N(6)-monoubiquitinyl-[acceptor protein]-L-lysine.. It participates in protein modification; protein ubiquitination. Its function is as follows. Catalyzes the covalent attachment of ubiquitin to other proteins. Acts as an essential factor of the anaphase promoting complex/cyclosome (APC/C), a cell cycle-regulated ubiquitin ligase that is essential for the transition from metaphase to anaphase in mitosis. Involved in both degradation of proteins responsible for maintaining sister chromatid cohesion at the onset of anaphase and of mitotic cyclins A and B at the exit of mitosis. Acts by initiating polyubiquitin chains on APC/C substrates, leading to the degradation of APC/C substrates by the proteasome and promoting mitotic exit. The chain is Ubiquitin-conjugating enzyme E2 C (UBE2C) from Spisula solidissima (Atlantic surf-clam).